A 226-amino-acid chain; its full sequence is GTP-binding nuclear protein Ran-3 (226 aa).

Residues 14–178 form the Small GTPase Ran-type domain; the sequence is GYPSFKLILV…LYLARKLTGD (165 aa). 25–32 is a binding site for GTP; sequence DGGTGKTT. The tract at residues 44–52 is switch-I; the sequence is KRYEPTIGV. GTP contacts are provided by residues Gly75, 129–132, and 157–159; these read NKVD and SAK. The interval 75–91 is switch-II; the sequence is GQEKFGGLRDGYYIHGH.

It belongs to the small GTPase superfamily. Ran family. Found in a nuclear export complex with RanGTP, exportin and pre-miRNA.

Its subcellular location is the nucleus. Functionally, GTP-binding protein involved in nucleocytoplasmic transport. Required for the import of protein into the nucleus and also for RNA export. Involved in chromatin condensation and control of cell cycle. This Oryza sativa subsp. indica (Rice) protein is GTP-binding nuclear protein Ran-3 (RAN3).